Here is a 28-residue protein sequence, read N- to C-terminus: leu operon leader peptide (28 aa).

Its function is as follows. Involved in control of the biosynthesis of leucine. In Salmonella typhimurium (strain LT2 / SGSC1412 / ATCC 700720), this protein is leu operon leader peptide (leuL).